Reading from the N-terminus, the 450-residue chain is L-galactonate dehydratase (450 aa).

K221 is an active-site residue. Residues D251, E277, and E306 each coordinate Mg(2+). Residue H356 is part of the active site.

The protein belongs to the mandelate racemase/muconate lactonizing enzyme family. It depends on Mg(2+) as a cofactor.

The enzyme catalyses L-galactonate = 2-dehydro-3-deoxy-L-galactonate + H2O. It functions in the pathway carbohydrate acid metabolism. In terms of biological role, mediates the conversion of L-galactonate to 2-dehydro-3-deoxy-L-galactonate, the second step in D-galacturonate catabolic process. This is L-galactonate dehydratase (lgd1) from Hypocrea jecorina (Trichoderma reesei).